The sequence spans 292 residues: Acetyl-coenzyme A carboxylase carboxyl transferase subunit beta (292 aa).

The 264-residue stretch at 29–292 folds into the CoA carboxyltransferase N-terminal domain; the sequence is LWVKCSECGQ…HGVKDLMGAN (264 aa). Residues Cys-33, Cys-36, Cys-52, and Cys-55 each coordinate Zn(2+). A C4-type zinc finger spans residues 33–55; it reads CSECGQVAYRKDLISNFNVCSNC.

Belongs to the AccD/PCCB family. As to quaternary structure, acetyl-CoA carboxylase is a heterohexamer composed of biotin carboxyl carrier protein (AccB), biotin carboxylase (AccC) and two subunits each of ACCase subunit alpha (AccA) and ACCase subunit beta (AccD). Zn(2+) serves as cofactor.

It localises to the cytoplasm. The catalysed reaction is N(6)-carboxybiotinyl-L-lysyl-[protein] + acetyl-CoA = N(6)-biotinyl-L-lysyl-[protein] + malonyl-CoA. It participates in lipid metabolism; malonyl-CoA biosynthesis; malonyl-CoA from acetyl-CoA: step 1/1. Functionally, component of the acetyl coenzyme A carboxylase (ACC) complex. Biotin carboxylase (BC) catalyzes the carboxylation of biotin on its carrier protein (BCCP) and then the CO(2) group is transferred by the transcarboxylase to acetyl-CoA to form malonyl-CoA. The protein is Acetyl-coenzyme A carboxylase carboxyl transferase subunit beta of Prochlorococcus marinus (strain MIT 9515).